We begin with the raw amino-acid sequence, 234 residues long: Adenosine 5'-phosphosulfate reductase (234 aa).

[4Fe-4S] cluster contacts are provided by Cys-120, Cys-121, Cys-203, and Cys-206. Cys-229 functions as the Nucleophile; cysteine thiosulfonate intermediate in the catalytic mechanism.

The protein belongs to the PAPS reductase family. CysH subfamily. It depends on [4Fe-4S] cluster as a cofactor.

Its subcellular location is the cytoplasm. The enzyme catalyses [thioredoxin]-disulfide + sulfite + AMP + 2 H(+) = adenosine 5'-phosphosulfate + [thioredoxin]-dithiol. Its pathway is sulfur metabolism; hydrogen sulfide biosynthesis; sulfite from sulfate. Functionally, catalyzes the formation of sulfite from adenosine 5'-phosphosulfate (APS) using thioredoxin as an electron donor. This Bacillus thuringiensis subsp. konkukian (strain 97-27) protein is Adenosine 5'-phosphosulfate reductase.